The primary structure comprises 334 residues: Nucleoid-associated protein YPK_2796 (334 aa).

The protein belongs to the YejK family.

The protein resides in the cytoplasm. It localises to the nucleoid. This chain is Nucleoid-associated protein YPK_2796, found in Yersinia pseudotuberculosis serotype O:3 (strain YPIII).